We begin with the raw amino-acid sequence, 534 residues long: Cytochrome c oxidase subunit 1 (534 aa).

A helical membrane pass occupies residues 16 to 36; it reads VLYFIFAIFCGMAGTAMSLII. Positions 39, 42, and 44 each coordinate Ca(2+). A run of 6 helical transmembrane segments spans residues 57–77, 101–121, 147–167, 182–202, 235–255, and 267–287; these read VLVVGHAVLIIFFLVMPALIG, ISFWCLPPALVCLVTSTLVES, AIFALHLTSISSLLGAINFIV, LPLFVWSIFITAFLLLLSLPV, LFWFFGHPEVYILIIPGFGII, and VFGEVSMVYAMASIGLLGFLV. Fe(II)-heme a is bound at residue H62. H241 contributes to the Cu cation binding site. The segment at residues 241-245 is a cross-link (1'-histidyl-3'-tyrosine (His-Tyr)); the sequence is HPEVY. Y245 serves as a coordination point for O2. H290 and H291 together coordinate Cu cation. 2 helical membrane-spanning segments follow: residues 310–330 and 338–358; these read MIIAIPTGIKIFSWLATIYGG and MLYAIAFLFLFTIGGLTGVAL. Residues H368 and D369 each contribute to the Mg(2+) site. 2 helical membrane passes run 372 to 392 and 412 to 432; these read YVVGHFHYVLSMGAIFSLFAG and IQFWLIFVGANVIFLPMHFLG. Heme a3 is bound at residue H376. A Fe(II)-heme a-binding site is contributed by H378. P441 contributes to the Ca(2+) binding site. A helical membrane pass occupies residues 452–472; it reads YVASIGSIIAVFSLFLFIYIL.

This sequence belongs to the heme-copper respiratory oxidase family. As to quaternary structure, component of the cytochrome c oxidase (complex IV, CIV), a multisubunit enzyme composed of a catalytic core of 3 subunits and several supernumerary subunits. The complex exists as a monomer or a dimer and forms supercomplexes (SCs) in the inner mitochondrial membrane with ubiquinol-cytochrome c oxidoreductase (cytochrome b-c1 complex, complex III, CIII). The cofactor is heme. Requires Cu cation as cofactor.

The protein localises to the mitochondrion inner membrane. The catalysed reaction is 4 Fe(II)-[cytochrome c] + O2 + 8 H(+)(in) = 4 Fe(III)-[cytochrome c] + 2 H2O + 4 H(+)(out). It participates in energy metabolism; oxidative phosphorylation. Component of the cytochrome c oxidase, the last enzyme in the mitochondrial electron transport chain which drives oxidative phosphorylation. The respiratory chain contains 3 multisubunit complexes succinate dehydrogenase (complex II, CII), ubiquinol-cytochrome c oxidoreductase (cytochrome b-c1 complex, complex III, CIII) and cytochrome c oxidase (complex IV, CIV), that cooperate to transfer electrons derived from NADH and succinate to molecular oxygen, creating an electrochemical gradient over the inner membrane that drives transmembrane transport and the ATP synthase. Cytochrome c oxidase is the component of the respiratory chain that catalyzes the reduction of oxygen to water. Electrons originating from reduced cytochrome c in the intermembrane space (IMS) are transferred via the dinuclear copper A center (CU(A)) of subunit 2 and heme A of subunit 1 to the active site in subunit 1, a binuclear center (BNC) formed by heme A3 and copper B (CU(B)). The BNC reduces molecular oxygen to 2 water molecules using 4 electrons from cytochrome c in the IMS and 4 protons from the mitochondrial matrix. The polypeptide is Cytochrome c oxidase subunit 1 (COX1) (Kluyveromyces lactis (strain ATCC 8585 / CBS 2359 / DSM 70799 / NBRC 1267 / NRRL Y-1140 / WM37) (Yeast)).